We begin with the raw amino-acid sequence, 295 residues long: Indole-3-glycerol phosphate synthase (295 aa).

The protein belongs to the TrpC family.

It catalyses the reaction 1-(2-carboxyphenylamino)-1-deoxy-D-ribulose 5-phosphate + H(+) = (1S,2R)-1-C-(indol-3-yl)glycerol 3-phosphate + CO2 + H2O. The protein operates within amino-acid biosynthesis; L-tryptophan biosynthesis; L-tryptophan from chorismate: step 4/5. The polypeptide is Indole-3-glycerol phosphate synthase (Synechococcus sp. (strain CC9605)).